The sequence spans 116 residues: Large ribosomal subunit protein bL19 (116 aa).

This sequence belongs to the bacterial ribosomal protein bL19 family.

This protein is located at the 30S-50S ribosomal subunit interface and may play a role in the structure and function of the aminoacyl-tRNA binding site. This Pseudomonas aeruginosa (strain LESB58) protein is Large ribosomal subunit protein bL19.